Here is a 111-residue protein sequence, read N- to C-terminus: MAPSQKALLVLVLSMLLTASDSRARRIDCTRFVYAPICRGVAAKRGGDSLSVGASTELDDALTDPFLRSEEPREEDTEKKWRELSRLSRVLQILLSHPTGETEQLDRLLTL.

The signal sequence occupies residues 1 to 24 (MAPSQKALLVLVLSMLLTASDSRA). Cysteine 29 and cysteine 38 form a disulfide bridge. Positions 44 to 111 (KRGGDSLSVG…TEQLDRLLTL (68 aa)) are excised as a propeptide.

It belongs to the elevenin family. As to quaternary structure, monomer. As to expression, expressed by the venom duct.

Its subcellular location is the secreted. In terms of biological role, may mimic the function of prey elevenin neuropeptide. In vivo, intracranial injection in mice induces hyperactivity. This is Elevenin from Conus ebraeus (Hebrew cone).